The following is a 407-amino-acid chain: Multifunctional CCA protein (407 aa).

Residues glycine 8 and arginine 11 each contribute to the ATP site. CTP-binding residues include glycine 8 and arginine 11. The Mg(2+) site is built by aspartate 21 and aspartate 23. 3 residues coordinate ATP: arginine 91, arginine 137, and arginine 140. CTP is bound by residues arginine 91, arginine 137, and arginine 140. The HD domain maps to 228–329; the sequence is SGIHTLMVAQ…IKIFDKMDVW (102 aa).

Belongs to the tRNA nucleotidyltransferase/poly(A) polymerase family. Bacterial CCA-adding enzyme type 1 subfamily. As to quaternary structure, monomer. Can also form homodimers and oligomers. It depends on Mg(2+) as a cofactor. The cofactor is Ni(2+).

The catalysed reaction is a tRNA precursor + 2 CTP + ATP = a tRNA with a 3' CCA end + 3 diphosphate. It catalyses the reaction a tRNA with a 3' CCA end + 2 CTP + ATP = a tRNA with a 3' CCACCA end + 3 diphosphate. In terms of biological role, catalyzes the addition and repair of the essential 3'-terminal CCA sequence in tRNAs without using a nucleic acid template. Adds these three nucleotides in the order of C, C, and A to the tRNA nucleotide-73, using CTP and ATP as substrates and producing inorganic pyrophosphate. tRNA 3'-terminal CCA addition is required both for tRNA processing and repair. Also involved in tRNA surveillance by mediating tandem CCA addition to generate a CCACCA at the 3' terminus of unstable tRNAs. While stable tRNAs receive only 3'-terminal CCA, unstable tRNAs are marked with CCACCA and rapidly degraded. This chain is Multifunctional CCA protein, found in Aliivibrio fischeri (strain MJ11) (Vibrio fischeri).